Reading from the N-terminus, the 290-residue chain is 6-carboxyhexanoate--CoA ligase (290 aa).

It belongs to the BioW family. Homodimer. It depends on Mg(2+) as a cofactor.

It catalyses the reaction heptanedioate + ATP + CoA = 6-carboxyhexanoyl-CoA + AMP + diphosphate. The protein operates within metabolic intermediate metabolism; pimeloyl-CoA biosynthesis; pimeloyl-CoA from pimelate: step 1/1. Functionally, catalyzes the transformation of pimelate into pimeloyl-CoA with concomitant hydrolysis of ATP to AMP. The sequence is that of 6-carboxyhexanoate--CoA ligase from Bacillus amyloliquefaciens (Bacillus velezensis).